The following is a 285-amino-acid chain: CCR4-NOT transcription complex subunit 7 (285 aa).

A divalent metal cation contacts are provided by aspartate 40, glutamate 42, aspartate 161, aspartate 230, and glutamate 278.

This sequence belongs to the CAF1 family. In terms of assembly, component of the CCR4-NOT complex. Requires Mn(2+) as cofactor. The cofactor is Mg(2+). It depends on Co(2+) as a cofactor.

It localises to the nucleus. The protein localises to the cytoplasm. The catalysed reaction is Exonucleolytic cleavage of poly(A) to 5'-AMP.. In terms of biological role, has 3'-5' poly(A) exoribonuclease activity for synthetic poly(A) RNA substrate. Catalytic component of the CCR4-NOT complex which is one of the major cellular mRNA deadenylases and is linked to various cellular processes including bulk mRNA degradation, miRNA-mediated repression, translational repression during translational initiation and general transcription regulation. During miRNA-mediated repression the complex also seems to act as translational repressor during translational initiation. Additional complex functions may be a consequence of its influence on mRNA expression. The polypeptide is CCR4-NOT transcription complex subunit 7 (cnot7) (Xenopus tropicalis (Western clawed frog)).